A 237-amino-acid chain; its full sequence is Uridylate kinase (237 aa).

9–12 (KLSG) lines the ATP pocket. Position 51 (G51) interacts with UMP. ATP-binding residues include G52 and R56. UMP is bound by residues D71 and 132–139 (CGNPFFTT). ATP contacts are provided by T159, Y165, and D168.

Belongs to the UMP kinase family. Homohexamer.

Its subcellular location is the cytoplasm. The catalysed reaction is UMP + ATP = UDP + ADP. It participates in pyrimidine metabolism; CTP biosynthesis via de novo pathway; UDP from UMP (UMPK route): step 1/1. Inhibited by UTP. Its function is as follows. Catalyzes the reversible phosphorylation of UMP to UDP. The polypeptide is Uridylate kinase (Prochlorococcus marinus (strain NATL1A)).